Here is a 579-residue protein sequence, read N- to C-terminus: Peptidyl-prolyl cis-trans isomerase-like 2 (579 aa).

Residues 42–115 (RRLPFNFCSL…GEYVDPVTYK (74 aa)) enclose the U-box domain. The interval 227–261 (AERAQRAESGAASKGLTKPGMSATAASQKTVSHQA) is disordered. Residues 250–259 (TAASQKTVSH) are compositionally biased toward polar residues. Residues 311–470 (QKGYARISTT…PDIRIKDVTI (160 aa)) form the PPIase cyclophilin-type domain. Positions 555–579 (EGPEPEPAKKKFKGGGGFGDFSSWD) are disordered.

It belongs to the cyclophilin-type PPIase family. PPIL2 subfamily.

It is found in the nucleus. It catalyses the reaction [protein]-peptidylproline (omega=180) = [protein]-peptidylproline (omega=0). The catalysed reaction is S-ubiquitinyl-[E2 ubiquitin-conjugating enzyme]-L-cysteine + [acceptor protein]-L-lysine = [E2 ubiquitin-conjugating enzyme]-L-cysteine + N(6)-ubiquitinyl-[acceptor protein]-L-lysine.. It participates in protein modification; protein ubiquitination. In terms of biological role, may catalyze the cis-trans isomerization of proline imidic peptide bonds in oligopeptides thereby assisting the folding of proteins. May also function as a chaperone, playing a role in intracellular transport of proteins. May also have a protein ubiquitin ligase activity acting as an E3 ubiquitin protein ligase or as a ubiquitin-ubiquitin ligase promoting elongation of ubiquitin chains on proteins. The protein is Peptidyl-prolyl cis-trans isomerase-like 2 (cyp8) of Aspergillus fumigatus (strain ATCC MYA-4609 / CBS 101355 / FGSC A1100 / Af293) (Neosartorya fumigata).